Here is a 503-residue protein sequence, read N- to C-terminus: Maturase K (503 aa).

The protein belongs to the intron maturase 2 family. MatK subfamily.

It is found in the plastid. Its subcellular location is the chloroplast. Functionally, usually encoded in the trnK tRNA gene intron. Probably assists in splicing its own and other chloroplast group II introns. This chain is Maturase K, found in Psilotum nudum (Whisk fern).